Reading from the N-terminus, the 417-residue chain is Serine hydroxymethyltransferase (417 aa).

Residues Leu120 and 124–126 (GHL) each bind (6S)-5,6,7,8-tetrahydrofolate. Lys229 bears the N6-(pyridoxal phosphate)lysine mark.

Belongs to the SHMT family. As to quaternary structure, homodimer. The cofactor is pyridoxal 5'-phosphate.

Its subcellular location is the cytoplasm. The catalysed reaction is (6R)-5,10-methylene-5,6,7,8-tetrahydrofolate + glycine + H2O = (6S)-5,6,7,8-tetrahydrofolate + L-serine. The protein operates within one-carbon metabolism; tetrahydrofolate interconversion. Its pathway is amino-acid biosynthesis; glycine biosynthesis; glycine from L-serine: step 1/1. Its function is as follows. Catalyzes the reversible interconversion of serine and glycine with tetrahydrofolate (THF) serving as the one-carbon carrier. This reaction serves as the major source of one-carbon groups required for the biosynthesis of purines, thymidylate, methionine, and other important biomolecules. Also exhibits THF-independent aldolase activity toward beta-hydroxyamino acids, producing glycine and aldehydes, via a retro-aldol mechanism. The sequence is that of Serine hydroxymethyltransferase from Anaeromyxobacter sp. (strain Fw109-5).